A 302-amino-acid chain; its full sequence is uncharacterized protein (302 aa).

The signal sequence occupies residues 1-28 (MNKLTAQNLLKKSRFLKYSLLTSISVGA).

This is an uncharacterized protein from Rickettsia prowazekii (strain Madrid E).